The primary structure comprises 1303 residues: DNA-directed RNA polymerase subunit beta' (1303 aa).

Zn(2+)-binding residues include Cys60, Cys62, Cys75, and Cys78. Positions 535, 537, and 539 each coordinate Mg(2+). Residues Cys876, Cys953, Cys960, and Cys963 each contribute to the Zn(2+) site.

The protein belongs to the RNA polymerase beta' chain family. In terms of assembly, the RNAP catalytic core consists of 2 alpha, 1 beta, 1 beta' and 1 omega subunit. When a sigma factor is associated with the core the holoenzyme is formed, which can initiate transcription. It depends on Mg(2+) as a cofactor. Requires Zn(2+) as cofactor.

It carries out the reaction RNA(n) + a ribonucleoside 5'-triphosphate = RNA(n+1) + diphosphate. In terms of biological role, DNA-dependent RNA polymerase catalyzes the transcription of DNA into RNA using the four ribonucleoside triphosphates as substrates. The sequence is that of DNA-directed RNA polymerase subunit beta' from Saccharopolyspora erythraea (strain ATCC 11635 / DSM 40517 / JCM 4748 / NBRC 13426 / NCIMB 8594 / NRRL 2338).